The primary structure comprises 391 residues: Pyridinium-3,5-bisthiocarboxylic acid mononucleotide nickel insertion protein (391 aa).

It belongs to the LarC family.

It carries out the reaction Ni(II)-pyridinium-3,5-bisthiocarboxylate mononucleotide = pyridinium-3,5-bisthiocarboxylate mononucleotide + Ni(2+). Functionally, involved in the biosynthesis of a nickel-pincer cofactor ((SCS)Ni(II) pincer complex). Binds Ni(2+), and functions in nickel delivery to pyridinium-3,5-bisthiocarboxylic acid mononucleotide (P2TMN), to form the mature cofactor. Is thus probably required for the activation of nickel-pincer cofactor-dependent enzymes. The chain is Pyridinium-3,5-bisthiocarboxylic acid mononucleotide nickel insertion protein from Staphylococcus saprophyticus subsp. saprophyticus (strain ATCC 15305 / DSM 20229 / NCIMB 8711 / NCTC 7292 / S-41).